The chain runs to 548 residues: Membrane protein insertase YidC (548 aa).

5 helical membrane passes run 6-26 (NLIL…WESD), 349-369 (TVFQ…TLLV), 424-444 (LGGC…YWAL), 455-475 (FALW…PILM), and 503-523 (PIIF…YWLV).

The protein belongs to the OXA1/ALB3/YidC family. Type 1 subfamily. In terms of assembly, interacts with the Sec translocase complex via SecD. Specifically interacts with transmembrane segments of nascent integral membrane proteins during membrane integration.

The protein resides in the cell inner membrane. Functionally, required for the insertion and/or proper folding and/or complex formation of integral membrane proteins into the membrane. Involved in integration of membrane proteins that insert both dependently and independently of the Sec translocase complex, as well as at least some lipoproteins. Aids folding of multispanning membrane proteins. This Aeromonas salmonicida (strain A449) protein is Membrane protein insertase YidC.